The primary structure comprises 592 residues: Inactive metallocarboxypeptidase ecm14 (592 aa).

The N-terminal stretch at 1–22 (MYRQDHVFVVLCAVLLAGQVTA) is a signal peptide. Positions 23-175 (VPAGTGINPH…AIYESRYPTR (153 aa)) are excised as a propeptide. The Peptidase M14 domain maps to 203–524 (HYQPFNVILQ…NSVLVLGHFL (322 aa)). Zn(2+) is bound by residues histidine 267 and glutamate 270. Residues 267–270 (HARE), arginine 325, and 342–343 (DR) contribute to the substrate site. Residues cysteine 336 and cysteine 359 are joined by a disulfide bond. Asparagine 383 carries N-linked (GlcNAc...) asparagine glycosylation. Residue histidine 399 coordinates Zn(2+). 400-401 (SY) contributes to the substrate binding site. A glycan (N-linked (GlcNAc...) asparagine) is linked at asparagine 548.

It belongs to the peptidase M14 family. Zn(2+) is required as a cofactor.

It is found in the vacuole. It localises to the secreted. Functionally, inactive carboxypeptidase that may play a role in cell wall organization and biogenesis. The protein is Inactive metallocarboxypeptidase ecm14 (ecm14) of Talaromyces stipitatus (strain ATCC 10500 / CBS 375.48 / QM 6759 / NRRL 1006) (Penicillium stipitatum).